The primary structure comprises 247 residues: AA9 family lytic polysaccharide monooxygenase A (247 aa).

Positions 1–19 (MVRLASLAVLGSVIATASA) are cleaved as a signal peptide. Cu(2+) contacts are provided by H20 and H100. A disulfide bond links C60 and C185. H165 is an O2 binding site. Y182 serves as a coordination point for Cu(2+). N193 carries an N-linked (GlcNAc...) asparagine glycan.

The protein belongs to the polysaccharide monooxygenase AA9 family. Cu(2+) serves as cofactor.

Its subcellular location is the secreted. The enzyme catalyses [(1-&gt;4)-beta-D-glucosyl]n+m + reduced acceptor + O2 = 4-dehydro-beta-D-glucosyl-[(1-&gt;4)-beta-D-glucosyl]n-1 + [(1-&gt;4)-beta-D-glucosyl]m + acceptor + H2O.. Functionally, lytic polysaccharide monooxygenase (LPMO) that depolymerizes polysaccharides via the oxidation of scissile alpha- or beta-(1-4)-glycosidic bonds, yielding C4 oxidation products. Catalysis by LPMOs requires the reduction of the active-site copper from Cu(II) to Cu(I) by a reducing agent and H(2)O(2) or O(2) as a cosubstrate. Shows C4-oxidative cleavage of amorphous cellulose and soluble cello-oligosaccharides. Also active on xyloglucan, mixed-linkage beta-glucan, and glucomannan. Not active on crystalline forms of cellulose. Has higher affinity for linear substrates compared to branched substrates. Catalyzes a fast and specific peroxygenase reaction that is at least two orders of magnitude faster than the apparent monooxygenase reaction. The sequence is that of AA9 family lytic polysaccharide monooxygenase A from Schizophyllum commune (strain H4-8 / FGSC 9210) (Split gill fungus).